Consider the following 571-residue polypeptide: 2-succinyl-5-enolpyruvyl-6-hydroxy-3-cyclohexene-1-carboxylate synthase (571 aa).

It belongs to the TPP enzyme family. MenD subfamily. Homodimer. Mg(2+) is required as a cofactor. Mn(2+) serves as cofactor. It depends on thiamine diphosphate as a cofactor.

The enzyme catalyses isochorismate + 2-oxoglutarate + H(+) = 5-enolpyruvoyl-6-hydroxy-2-succinyl-cyclohex-3-ene-1-carboxylate + CO2. It participates in quinol/quinone metabolism; 1,4-dihydroxy-2-naphthoate biosynthesis; 1,4-dihydroxy-2-naphthoate from chorismate: step 2/7. The protein operates within quinol/quinone metabolism; menaquinone biosynthesis. Its function is as follows. Catalyzes the thiamine diphosphate-dependent decarboxylation of 2-oxoglutarate and the subsequent addition of the resulting succinic semialdehyde-thiamine pyrophosphate anion to isochorismate to yield 2-succinyl-5-enolpyruvyl-6-hydroxy-3-cyclohexene-1-carboxylate (SEPHCHC). This Vibrio parahaemolyticus serotype O3:K6 (strain RIMD 2210633) protein is 2-succinyl-5-enolpyruvyl-6-hydroxy-3-cyclohexene-1-carboxylate synthase.